An 87-amino-acid polypeptide reads, in one-letter code: HssA/B-like protein 8 (87 aa).

Over residues 1 to 22 (MSILSALTSISNPMKSTKSSVA) the composition is skewed to polar residues. The interval 1–24 (MSILSALTSISNPMKSTKSSVANG) is disordered.

This sequence belongs to the hssA/B family.

This chain is HssA/B-like protein 8 (hssl8), found in Dictyostelium discoideum (Social amoeba).